The sequence spans 315 residues: C1GALT1-specific chaperone 1-like protein (315 aa).

Over Met1 to Ser8 the chain is Cytoplasmic. The chain crosses the membrane as a helical; Signal-anchor for type II membrane protein span at residues Phe9 to Ile29. Over His30–Asp315 the chain is Lumenal. N-linked (GlcNAc...) asparagine glycosylation is found at Asn55 and Asn301.

This sequence belongs to the glycosyltransferase 31 family. Beta3-Gal-T subfamily.

Its subcellular location is the membrane. The chain is C1GALT1-specific chaperone 1-like protein from Homo sapiens (Human).